The chain runs to 283 residues: tRNA-cytidine(32) 2-sulfurtransferase (283 aa).

The PP-loop motif signature appears at 37 to 42 (SGGKDS). 3 residues coordinate [4Fe-4S] cluster: cysteine 112, cysteine 115, and cysteine 203.

This sequence belongs to the TtcA family. As to quaternary structure, homodimer. Mg(2+) is required as a cofactor. Requires [4Fe-4S] cluster as cofactor.

It is found in the cytoplasm. The catalysed reaction is cytidine(32) in tRNA + S-sulfanyl-L-cysteinyl-[cysteine desulfurase] + AH2 + ATP = 2-thiocytidine(32) in tRNA + L-cysteinyl-[cysteine desulfurase] + A + AMP + diphosphate + H(+). It functions in the pathway tRNA modification. Catalyzes the ATP-dependent 2-thiolation of cytidine in position 32 of tRNA, to form 2-thiocytidine (s(2)C32). The sulfur atoms are provided by the cysteine/cysteine desulfurase (IscS) system. This chain is tRNA-cytidine(32) 2-sulfurtransferase, found in Legionella pneumophila (strain Paris).